The sequence spans 423 residues: Amino sugar nitrososynthase RubN8 (423 aa).

This sequence belongs to the acyl-CoA dehydrogenase family. FAD serves as cofactor.

It participates in antibiotic biosynthesis. In terms of biological role, nitrososynthase involved in the biosynthesis of rubradirin, an ansamycin antibiotic. In vitro, catalyzes the double-oxidation of TDP-L-epi-vancosamine to TDP-L-epi-vancosonitrose. In vivo, probably catalyzes the formation of D-rubranitrose, the nitro sugar moiety of rubradirin. This Streptomyces rubradiris (Streptomyces achromogenes subsp. rubradiris) protein is Amino sugar nitrososynthase RubN8.